A 281-amino-acid polypeptide reads, in one-letter code: Nuclear transcription factor Y subunit nfya-2 (281 aa).

Disordered stretches follow at residues M1–Q27 and R163–E261. The short motif at M150 to G173 is the Subunit association domain (SAD) element. Residues R166 to R188 are compositionally biased toward basic and acidic residues. Residues Q180–N204 constitute a DNA-binding region (NFYA/HAP2-type). The span at Q189 to G198 shows a compositional bias: basic residues. Residues N204–A220 are compositionally biased toward low complexity.

Belongs to the NFYA/HAP2 subunit family. As to quaternary structure, forms a heterotrimeric transcription factor complex (nfya-2-NF-Y complex) composed of nfya-2, nfyb-1 and nfyc-1. Interacts with the nfyb-1 and nfyc-1 dimer; the interaction is required for subsequent binding to the 5'-CCAAT-3' box motif in DNA. Does not interact with either nfyb-1 or nfyc-1 in their monomeric form. In terms of tissue distribution, highly expressed in certain parts of the gonads. Expressed in the spermatheca, intestine and in some neurons in the head. Not expressed in the intestine, the hypodermis, body wall muscle surrounding the pseudocoelomic space, secretory cells in the pharyngeal terminal bulb wall, in the small ganglia surrounding the pharynx and in the neurons running anteriorly to the sensory organs in the head.

It localises to the nucleus. In terms of biological role, component of the sequence-specific heterotrimeric transcription factor (nfya-2-NF-Y) which specifically recognizes a 5'-CCAAT-3' box motif found in the promoters of its target genes to regulate their expression and control cellular identity in particular tissue types. In association with the components in the nfya-2-NF-Y complex, may repress the expression of the T-box transcription factor tbx-2 throughout larval development, which most likely restricts its expression to certain tissues. The chain is Nuclear transcription factor Y subunit nfya-2 from Caenorhabditis elegans.